A 201-amino-acid polypeptide reads, in one-letter code: uncharacterized protein (201 aa).

Belongs to the methyltransferase superfamily.

This is an uncharacterized protein from Bacillus subtilis (strain 168).